A 44-amino-acid polypeptide reads, in one-letter code: Metallothionein-4 (44 aa).

This sequence belongs to the metallothionein superfamily. Type 5 family.

This protein binds cations of several transition elements. Thought to be involved in metal ion homeostasis. This is Metallothionein-4 (MtnD) from Drosophila melanogaster (Fruit fly).